The following is a 495-amino-acid chain: Aspartyl/glutamyl-tRNA(Asn/Gln) amidotransferase subunit B (495 aa).

It belongs to the GatB/GatE family. GatB subfamily. Heterotrimer of A, B and C subunits.

It carries out the reaction L-glutamyl-tRNA(Gln) + L-glutamine + ATP + H2O = L-glutaminyl-tRNA(Gln) + L-glutamate + ADP + phosphate + H(+). The enzyme catalyses L-aspartyl-tRNA(Asn) + L-glutamine + ATP + H2O = L-asparaginyl-tRNA(Asn) + L-glutamate + ADP + phosphate + 2 H(+). In terms of biological role, allows the formation of correctly charged Asn-tRNA(Asn) or Gln-tRNA(Gln) through the transamidation of misacylated Asp-tRNA(Asn) or Glu-tRNA(Gln) in organisms which lack either or both of asparaginyl-tRNA or glutaminyl-tRNA synthetases. The reaction takes place in the presence of glutamine and ATP through an activated phospho-Asp-tRNA(Asn) or phospho-Glu-tRNA(Gln). This is Aspartyl/glutamyl-tRNA(Asn/Gln) amidotransferase subunit B from Prochlorococcus marinus (strain MIT 9313).